A 531-amino-acid chain; its full sequence is Protein tweety homolog 2-like (531 aa).

Over 1 to 44 the chain is Extracellular; that stretch reads MASSRQDYIAPWWTYWLHNFPHLNFNFQTVDNTFKPEDASYQQS. A helical membrane pass occupies residues 45–65; sequence LVFLACVSAVALGLCLLLLSV. At 66-87 the chain is on the cytoplasmic side; that stretch reads YLTCLCCCRREEDEEVKRPDTC. Residues 88 to 108 traverse the membrane as a helical segment; the sequence is CVTWAAVITGLVICSAVGVGF. At 109–213 the chain is on the extracellular side; the sequence is YGNSETNDGV…RTAFIEYYRW (105 aa). Asparagine 129 carries an N-linked (GlcNAc...) asparagine glycan. The helical transmembrane segment at 214–234 threads the bilayer; the sequence is LTYLLLLILDLVICLLACLAL. The Cytoplasmic segment spans residues 235-239; that stretch reads AKQSR. A helical membrane pass occupies residues 240–260; that stretch reads WLLTVIMVCGMLTLIMSWASL. The Extracellular portion of the chain corresponds to 261–389; that stretch reads GAGTATAVGT…GVCYDGVEGL (129 aa). Asparagine 283 and asparagine 352 each carry an N-linked (GlcNAc...) asparagine glycan. A helical membrane pass occupies residues 390-410; the sequence is LYLCLFSLLAACAFCALLCAV. At 411–531 the chain is on the cytoplasmic side; the sequence is PRAWMLIAIR…IRHFGTDFQV (121 aa).

Belongs to the tweety family.

The protein localises to the cell membrane. Probable large-conductance Ca(2+)-activated chloride channel. The protein is Protein tweety homolog 2-like (ttyh2l) of Danio rerio (Zebrafish).